Reading from the N-terminus, the 632-residue chain is Extracellular metalloproteinase 2 (632 aa).

Residues 1-19 form the signal peptide; the sequence is MHGLLLAGLAAALPLGVAG. Positions 20-244 are excised as a propeptide; that stretch reads LPARQQSGLS…VHNVVDYVAS (225 aa). N-linked (GlcNAc...) asparagine glycosylation occurs at N270. H429 contributes to the Zn(2+) binding site. E430 is a catalytic residue. H433 lines the Zn(2+) pocket.

The protein belongs to the peptidase M36 family. Zn(2+) serves as cofactor.

Its subcellular location is the secreted. In terms of biological role, secreted metalloproteinase probably acting as a virulence factor. The polypeptide is Extracellular metalloproteinase 2 (MEP2) (Trichophyton rubrum (Athlete's foot fungus)).